Here is a 636-residue protein sequence, read N- to C-terminus: Polyadenylate-binding protein 1 (636 aa).

Met-1 is subject to N-acetylmethionine. 4 consecutive RRM domains span residues 11 to 89 (ASLY…WSQR), 99 to 175 (GNIF…RFKS), 191 to 268 (TNVY…RAQK), and 294 to 370 (VNLY…LAQR). The CSDE1-binding stretch occupies residues 166-289 (RKVFVGRFKS…FEQMKQDRIT (124 aa)). Residue Lys-299 is modified to N6-methyllysine. Ser-315 bears the Phosphoserine mark. Thr-319 bears the Phosphothreonine mark. Arg-385, Arg-419, Arg-432, and Arg-436 each carry omega-N-methylarginine. An omega-N-methylated arginine; by CARM1 mark is found at Arg-455 and Arg-460. Residues Arg-475 and Arg-481 each carry the omega-N-methylarginine modification. At Arg-493 the chain carries Asymmetric dimethylarginine; alternate. A Dimethylated arginine; alternate modification is found at Arg-493. Residue Arg-493 is modified to Omega-N-methylarginine; alternate. Arg-506 is modified (omega-N-methylarginine). The residue at position 512 (Lys-512) is an N6-acetyllysine. Omega-N-methylarginine is present on Arg-518. One can recognise a PABC domain in the interval 542–619 (QEPLTASMLA…AVAVLQAHQA (78 aa)).

This sequence belongs to the polyadenylate-binding protein type-1 family. May form homodimers. Component of a multisubunit autoregulatory ribonucleoprotein complex (ARC), at least composed of IGF2BP1, PABPC1 and CSDE1. Directly interacts with IGF2BP1. Part of a complex associated with the FOS mCRD domain and consisting of HNRPD, SYNCRIP, PAIP1 and CSDE1/UNR. Interacts with PAIP1 and PAIP2 (via the PABPC1-interacting motifs PAM1 and PAM2). Interacts with PAIP1 with a 1:1 stoichiometry and with PAIP2 with a 1:2 stoichiometry. The interaction with CSDE1 is direct and RNA-independent. Found in a mRNP complex with YBX2. Interacts with TENT2/GLD2. Identified in the spliceosome C complex. Identified in a mRNP complex, at least composed of DHX9, DDX3X, ELAVL1, HNRNPU, IGF2BP1, ILF3, PABPC1, PCBP2, PTBP2, STAU1, STAU2, SYNCRIP and YBX1. The interaction with DDX3X is direct and RNA-independent. This interaction increases in stressed cells and decreases during cell recovery. Identified in a IGF2BP1-dependent mRNP granule complex containing untranslated mRNAs. Interacts with NXF1/TAP. Interacts with PIWIL1. Interacts with AGO1, AGO2, GSPT1 and GSPT2. Interacts with LARP4B. Interacts (via the second and third RRM domains and the C-terminus) with PAIP2B (via central acidic portion and C-terminus). Forms a complex with LARP1 and SHFL. Interacts with LARP4. Interacts with ZFC3H1 in a RNase-sensitive manner. Interacts with TRIM71 (via NHL repeats) in an RNA-dependent manner. Interacts with TENT5C; the interaction has no effect on TENT5C poly(A) polymerase function. Interacts with G3BP1 and G3BP2. Interacts with ENDOV; the interaction is RNA-dependent and stimulates ENDOV activity. Interacts with UPF1; the interaction is RNA-dependent. Interacts with IGF2BP2 and IGF2BP3. May interact with SETX. Interacts with RBM46. Interacts with PAN3. Phosphorylated by MAPKAPK2. Post-translationally, methylated by CARM1. Arg-493 is dimethylated, probably to asymmetric dimethylarginine.

The protein localises to the cytoplasm. It is found in the stress granule. The protein resides in the nucleus. Its subcellular location is the cell projection. It localises to the lamellipodium. Its function is as follows. Binds the poly(A) tail of mRNA, including that of its own transcript, and regulates processes of mRNA metabolism such as pre-mRNA splicing and mRNA stability. Its function in translational initiation regulation can either be enhanced by PAIP1 or repressed by PAIP2. Can probably bind to cytoplasmic RNA sequences other than poly(A) in vivo. Binds to N6-methyladenosine (m6A)-containing mRNAs and contributes to MYC stability by binding to m6A-containing MYC mRNAs. Involved in translationally coupled mRNA turnover. Implicated with other RNA-binding proteins in the cytoplasmic deadenylation/translational and decay interplay of the FOS mRNA mediated by the major coding-region determinant of instability (mCRD) domain. Involved in regulation of nonsense-mediated decay (NMD) of mRNAs containing premature stop codons; for the recognition of premature termination codons (PTC) and initiation of NMD a competitive interaction between UPF1 and PABPC1 with the ribosome-bound release factors is proposed. By binding to long poly(A) tails, may protect them from uridylation by ZCCHC6/ZCCHC11 and hence contribute to mRNA stability. The polypeptide is Polyadenylate-binding protein 1 (PABPC1) (Pongo abelii (Sumatran orangutan)).